Reading from the N-terminus, the 535-residue chain is Growth-regulating factor 2 (535 aa).

One can recognise a QLQ domain in the interval 164 to 199 (PFTLTQWAELEQQALIYKYITANVPVPSSLLISIKK). The region spanning 227 to 271 (DPEPGRCRRTDGKKWRCSRDAVPDQKYCERHINRGRHRSRKPVEV) is the WRC domain. 2 consecutive short sequence motifs (bipartite nuclear localization signal) follow at residues 232 to 242 (RCRRTDGKKWR) and 260 to 267 (RGRHRSRK). 3 disordered regions span residues 260 to 308 (RGRH…ASSN), 417 to 437 (PIASSSPSSTHNNNNAQEKTT), and 514 to 535 (SSVSSPIAENNRHNGDYFHYTT). Polar residues predominate over residues 272 to 291 (QSGQNQTAAAASKAVTTPQQ). Over residues 299-308 (NRSNARASSN) the composition is skewed to low complexity. A compositionally biased stretch (polar residues) spans 426–437 (THNNNNAQEKTT).

This sequence belongs to the GRF family. In terms of assembly, interacts with GIF1. Strongly expressed in actively growing and developing tissues, such as roots, upper stems, and shoot tips containing the shoot apical meristem (SAM) and flower buds. Detected in young leaf primordium. Also expressed in mature flowers, but weakly expressed in mature stems and leaves.

The protein resides in the nucleus. In terms of biological role, transcription activator that plays a role in the regulation of cell expansion in leaf and cotyledons tissues. Component of a network formed by miR396, the GRFs and their interacting factors (GIFs) acting in the regulation of meristem function, at least partially through the control of cell proliferation. This Arabidopsis thaliana (Mouse-ear cress) protein is Growth-regulating factor 2 (GRF2).